Reading from the N-terminus, the 122-residue chain is Large ribosomal subunit protein uL18 (122 aa).

It belongs to the universal ribosomal protein uL18 family. As to quaternary structure, part of the 50S ribosomal subunit; part of the 5S rRNA/L5/L18/L25 subcomplex. Contacts the 5S and 23S rRNAs.

This is one of the proteins that bind and probably mediate the attachment of the 5S RNA into the large ribosomal subunit, where it forms part of the central protuberance. This is Large ribosomal subunit protein uL18 from Mycobacterium ulcerans (strain Agy99).